A 222-amino-acid polypeptide reads, in one-letter code: Deoxyribose-phosphate aldolase (222 aa).

The active-site Proton donor/acceptor is Asp89. The Schiff-base intermediate with acetaldehyde role is filled by Lys152. Lys181 functions as the Proton donor/acceptor in the catalytic mechanism.

It belongs to the DeoC/FbaB aldolase family. DeoC type 1 subfamily.

Its subcellular location is the cytoplasm. The enzyme catalyses 2-deoxy-D-ribose 5-phosphate = D-glyceraldehyde 3-phosphate + acetaldehyde. It participates in carbohydrate degradation; 2-deoxy-D-ribose 1-phosphate degradation; D-glyceraldehyde 3-phosphate and acetaldehyde from 2-deoxy-alpha-D-ribose 1-phosphate: step 2/2. Functionally, catalyzes a reversible aldol reaction between acetaldehyde and D-glyceraldehyde 3-phosphate to generate 2-deoxy-D-ribose 5-phosphate. The polypeptide is Deoxyribose-phosphate aldolase (Alkaliphilus oremlandii (strain OhILAs) (Clostridium oremlandii (strain OhILAs))).